The sequence spans 273 residues: Ribosomal RNA small subunit methyltransferase A (273 aa).

6 residues coordinate S-adenosyl-L-methionine: Asn18, Leu20, Gly45, Glu66, Asp91, and Asn113.

It belongs to the class I-like SAM-binding methyltransferase superfamily. rRNA adenine N(6)-methyltransferase family. RsmA subfamily.

Its subcellular location is the cytoplasm. The catalysed reaction is adenosine(1518)/adenosine(1519) in 16S rRNA + 4 S-adenosyl-L-methionine = N(6)-dimethyladenosine(1518)/N(6)-dimethyladenosine(1519) in 16S rRNA + 4 S-adenosyl-L-homocysteine + 4 H(+). Functionally, specifically dimethylates two adjacent adenosines (A1518 and A1519) in the loop of a conserved hairpin near the 3'-end of 16S rRNA in the 30S particle. May play a critical role in biogenesis of 30S subunits. This is Ribosomal RNA small subunit methyltransferase A from Escherichia coli O17:K52:H18 (strain UMN026 / ExPEC).